A 439-amino-acid polypeptide reads, in one-letter code: GTPase Der (439 aa).

EngA-type G domains follow at residues 3–167 (PTVA…DKVG) and 176–351 (IKVA…GNYT). GTP contacts are provided by residues 9–16 (GRPNVGKS), 56–60 (DTGGI), 119–122 (NKID), 182–189 (GKPNTGKS), 229–233 (DTAGL), and 294–297 (NKWD). The KH-like domain maps to 352–436 (RRITTGQIND…PIVFLIREKG (85 aa)).

It belongs to the TRAFAC class TrmE-Era-EngA-EngB-Septin-like GTPase superfamily. EngA (Der) GTPase family. In terms of assembly, associates with the 50S ribosomal subunit.

Functionally, GTPase that plays an essential role in the late steps of ribosome biogenesis. The polypeptide is GTPase Der (Caldicellulosiruptor saccharolyticus (strain ATCC 43494 / DSM 8903 / Tp8T 6331)).